Consider the following 707-residue polypeptide: Signal transducer and activator of transcription A (707 aa).

The segment covering 70–89 (LNQSDQFNLGRSNNLTPRTN) has biased composition (polar residues). Residues 70 to 246 (LNQSDQFNLG…GNPNLSSPQP (177 aa)) form a disordered region. The span at 90–111 (QLQQLQQQQQQQQQPQQQQQQQ) shows a compositional bias: low complexity. Residues 112-121 (TYGTQSPIHM) show a composition bias toward polar residues. The span at 142 to 238 (QQSYNNNNSN…QQQQQQQQGN (97 aa)) shows a compositional bias: low complexity. Residues 242-356 (SSPQPILDTI…IQSILNPQHS (115 aa)) are a coiled coil. The DNA-binding element occupies 443–487 (KFLAGTRKCSVNLKFGVNIRDLDNVTTTVESDASNPFVVITNECQ). The 104-residue stretch at 583–686 (WQEGIIYGYM…FLKLHKDTAL (104 aa)) folds into the SH2 domain. Y702 carries the post-translational modification Phosphotyrosine.

This sequence belongs to the transcription factor STAT family. In terms of assembly, monomer, in the absence of tyrosine phosphorylation. Homodimer, or heterodimer with another family member, when tyrosine phosphorylated. Tyrosine phosphorylated in response to cAMP. Not tyrosine phosphorylated in growing cells. Tyrosine phosphorylation is first detected at the tight mound stage, continues throughout the slug stage and early culmination, and starts to decrease at mid-culmination. Barely detectable in fruiting bodies.

It localises to the cytoplasm. The protein localises to the nucleus. Functionally, transcription factor that binds to 5'-TTGAATTGA-3' elements in the promoter region of target genes. Functions as a repressor of the ecmB gene. Regulates the differentiation of prestalk cells during development. This Dictyostelium discoideum (Social amoeba) protein is Signal transducer and activator of transcription A (dstA).